The chain runs to 225 residues: Insulin-induced gene 2 protein (225 aa).

The Cytoplasmic segment spans residues 1 to 28; sequence MAEGETKSPGPKKCGPYISSVTSQSVNL. A helical transmembrane segment spans residues 29 to 51; it reads MIRGVVLFFIGVFLALVLNLLQI. Residues 52–70 lie on the Lumenal side of the membrane; sequence QRNVTLFPPDVIASIFSSA. A helical transmembrane segment spans residues 71-88; the sequence is WWVPPCCGTASAVIGLLY. Topologically, residues 89 to 103 are cytoplasmic; that stretch reads PCIDRHLGEPHKFKR. Residues 104–126 form a helical membrane-spanning segment; sequence EWSSVMRCVAVFVGINHASAKVD. The Lumenal segment spans residues 127 to 129; sequence FDN. Residues 130-148 traverse the membrane as a helical segment; sequence NIQLSLTLAALSIGLWWTF. Residues 149–153 are Cytoplasmic-facing; that stretch reads DRSRS. Ser-151 bears the Phosphoserine mark. Residues 154–175 form a helical membrane-spanning segment; that stretch reads GFGLGVGIAFLATVVTQLLVYN. Residues 176-189 lie on the Lumenal side of the membrane; the sequence is GVYQYTSPDFLYVR. A helical membrane pass occupies residues 190 to 207; it reads SWLPCIFFAGGITMGNIG. At 208-225 the chain is on the cytoplasmic side; sequence RQLAMYECKVIAEKSHQE. Cys-215 bears the Cysteine sulfenic acid (-SOH); alternate mark. Cys-215 participates in a covalent cross-link: Glycyl cysteine thioester (Cys-Gly) (interchain with G-Cter in ubiquitin); alternate. The KxHxx motif lies at 219–225; it reads AEKSHQE.

Belongs to the INSIG family. Interacts with SCAP; interaction is direct and only takes place in the presence of sterols; it prevents interaction between SCAP and the coat protein complex II (COPII). Associates with the SCAP-SREBP complex (composed of SCAP and SREBF1/SREBP1 or SREBF2/SREBP2); association is mediated via its interaction with SCAP and only takes place in the presence of sterols. Interacts with RNF139. Interacts with RNF145. Phosphorylation at Ser-151 by PCK1 reduces binding to oxysterol, disrupting the interaction between INSIG2 and SCAP, thereby promoting nuclear translocation of SREBP proteins (SREBF1/SREBP1 or SREBF2/SREBP2) and subsequent transcription of downstream lipogenesis-related genes. Post-translationally, polyubiquitinated by AMFR/gp78 at Cys-215 in some tissues such as adipose tissues, undifferentiated myoblasts and liver, leading to its degradation. In differentiated myotubes, Cys-215 oxidation prevents ubiquitination at the same site, resulting in protein stabilization. In terms of processing, oxidized at Cys-215 in differentiated myotubes, preventing ubiquitination at the same site, and resulting in protein stabilization.

Its subcellular location is the endoplasmic reticulum membrane. In terms of biological role, oxysterol-binding protein that mediates feedback control of cholesterol synthesis by controlling both endoplasmic reticulum to Golgi transport of SCAP and degradation of HMGCR. Acts as a negative regulator of cholesterol biosynthesis by mediating the retention of the SCAP-SREBP complex in the endoplasmic reticulum, thereby blocking the processing of sterol regulatory element-binding proteins (SREBPs) SREBF1/SREBP1 and SREBF2/SREBP2. Binds oxysterol, including 22-hydroxycholesterol, 24-hydroxycholesterol, 25-hydroxycholesterol and 27-hydroxycholesterol, regulating interaction with SCAP and retention of the SCAP-SREBP complex in the endoplasmic reticulum. In presence of oxysterol, interacts with SCAP, retaining the SCAP-SREBP complex in the endoplasmic reticulum, thereby preventing SCAP from escorting SREBF1/SREBP1 and SREBF2/SREBP2 to the Golgi. Sterol deprivation or phosphorylation by PCK1 reduce oxysterol-binding, disrupting the interaction between INSIG2 and SCAP, thereby promoting Golgi transport of the SCAP-SREBP complex, followed by processing and nuclear translocation of SREBF1/SREBP1 and SREBF2/SREBP2. Also regulates cholesterol synthesis by regulating degradation of HMGCR: initiates the sterol-mediated ubiquitin-mediated endoplasmic reticulum-associated degradation (ERAD) of HMGCR via recruitment of the reductase to the ubiquitin ligase RNF139. The chain is Insulin-induced gene 2 protein from Pongo abelii (Sumatran orangutan).